Consider the following 36-residue polypeptide: Pancreatic polypeptide (36 aa).

Residue Tyr36 is modified to Tyrosine amide.

This sequence belongs to the NPY family.

It localises to the secreted. In terms of biological role, hormone secreted by pancreatic cells that acts as a regulator of pancreatic and gastrointestinal functions. The polypeptide is Pancreatic polypeptide (PPY) (Anser anser anser (Western greylag goose)).